The chain runs to 184 residues: NADH-quinone oxidoreductase subunit B (184 aa).

Positions 63, 64, 128, and 158 each coordinate [4Fe-4S] cluster.

Belongs to the complex I 20 kDa subunit family. In terms of assembly, NDH-1 is composed of 14 different subunits. Subunits NuoB, C, D, E, F, and G constitute the peripheral sector of the complex. The cofactor is [4Fe-4S] cluster.

It localises to the cell inner membrane. It carries out the reaction a quinone + NADH + 5 H(+)(in) = a quinol + NAD(+) + 4 H(+)(out). NDH-1 shuttles electrons from NADH, via FMN and iron-sulfur (Fe-S) centers, to quinones in the respiratory chain. Couples the redox reaction to proton translocation (for every two electrons transferred, four hydrogen ions are translocated across the cytoplasmic membrane), and thus conserves the redox energy in a proton gradient. This chain is NADH-quinone oxidoreductase subunit B, found in Xylella fastidiosa (strain 9a5c).